A 253-amino-acid chain; its full sequence is Trypsin beta (253 aa).

The signal sequence occupies residues Met1 to Gly22. Residues Leu23–Arg30 constitute a propeptide, activation peptide. Residues Ile31–Ala253 form the Peptidase S1 domain. Cys56 and Cys72 form a disulfide bridge. Active-site charge relay system residues include His71 and Asp116. Disulfide bonds link Cys180–Cys197 and Cys206–Cys230. The active-site Charge relay system is Ser210.

The protein belongs to the peptidase S1 family.

It localises to the secreted. It is found in the extracellular space. It catalyses the reaction Preferential cleavage: Arg-|-Xaa, Lys-|-Xaa.. This Drosophila erecta (Fruit fly) protein is Trypsin beta (betaTry).